We begin with the raw amino-acid sequence, 649 residues long: Acetyl-coenzyme A synthetase (649 aa).

Residues 189 to 192 (RGGK), T311, and N335 each bind CoA. Residues 387–389 (GEP), 411–416 (DTWWQT), D500, and R515 contribute to the ATP site. Residue S523 coordinates CoA. ATP is bound at residue R526. V537, H539, and V542 together coordinate Mg(2+). CoA is bound at residue R584. At K609 the chain carries N6-acetyllysine.

This sequence belongs to the ATP-dependent AMP-binding enzyme family. Mg(2+) serves as cofactor. Acetylated. Deacetylation by the SIR2-homolog deacetylase activates the enzyme.

It catalyses the reaction acetate + ATP + CoA = acetyl-CoA + AMP + diphosphate. Functionally, catalyzes the conversion of acetate into acetyl-CoA (AcCoA), an essential intermediate at the junction of anabolic and catabolic pathways. AcsA undergoes a two-step reaction. In the first half reaction, AcsA combines acetate with ATP to form acetyl-adenylate (AcAMP) intermediate. In the second half reaction, it can then transfer the acetyl group from AcAMP to the sulfhydryl group of CoA, forming the product AcCoA. In Rhizobium meliloti (strain 1021) (Ensifer meliloti), this protein is Acetyl-coenzyme A synthetase.